The primary structure comprises 372 residues: Flagellar P-ring protein (372 aa).

The first 26 residues, 1 to 26 (MNLSSLPFRLLAAAVALCAIAAPASA), serve as a signal peptide directing secretion.

This sequence belongs to the FlgI family. In terms of assembly, the basal body constitutes a major portion of the flagellar organelle and consists of four rings (L,P,S, and M) mounted on a central rod.

It localises to the periplasm. Its subcellular location is the bacterial flagellum basal body. In terms of biological role, assembles around the rod to form the L-ring and probably protects the motor/basal body from shearing forces during rotation. The sequence is that of Flagellar P-ring protein from Xanthomonas campestris pv. campestris (strain B100).